The chain runs to 91 residues: Large ribosomal subunit protein uL22 (91 aa).

It belongs to the universal ribosomal protein uL22 family. Part of the 50S ribosomal subunit.

Functionally, this protein binds specifically to 23S rRNA; its binding is stimulated by other ribosomal proteins, e.g. L4, L17, and L20. It is important during the early stages of 50S assembly. It makes multiple contacts with different domains of the 23S rRNA in the assembled 50S subunit and ribosome. Its function is as follows. The globular domain of the protein is located near the polypeptide exit tunnel on the outside of the subunit, while an extended beta-hairpin is found that lines the wall of the exit tunnel in the center of the 70S ribosome. This is Large ribosomal subunit protein uL22 (rplV) from Ash yellows phytoplasma.